We begin with the raw amino-acid sequence, 611 residues long: Methionine--tRNA ligase (611 aa).

The short motif at 12–22 (PYANGPRHIGH) is the 'HIGH' region element. Zn(2+)-binding residues include Cys-144, Cys-147, Cys-157, and Cys-160. The short motif at 348–352 (KFSSS) is the 'KMSKS' region element. ATP is bound at residue Ser-351.

It belongs to the class-I aminoacyl-tRNA synthetase family. MetG type 1 subfamily. As to quaternary structure, monomer. Requires Zn(2+) as cofactor.

Its subcellular location is the cytoplasm. The catalysed reaction is tRNA(Met) + L-methionine + ATP = L-methionyl-tRNA(Met) + AMP + diphosphate. Its function is as follows. Is required not only for elongation of protein synthesis but also for the initiation of all mRNA translation through initiator tRNA(fMet) aminoacylation. This Corynebacterium urealyticum (strain ATCC 43042 / DSM 7109) protein is Methionine--tRNA ligase.